A 168-amino-acid chain; its full sequence is Segregation and condensation protein B (168 aa).

It belongs to the ScpB family. Homodimer. Homodimerization may be required to stabilize the binding of ScpA to the Smc head domains. Component of a cohesin-like complex composed of ScpA, ScpB and the Smc homodimer, in which ScpA and ScpB bind to the head domain of Smc. The presence of the three proteins is required for the association of the complex with DNA.

It localises to the cytoplasm. Its function is as follows. Participates in chromosomal partition during cell division. May act via the formation of a condensin-like complex containing Smc and ScpA that pull DNA away from mid-cell into both cell halves. The chain is Segregation and condensation protein B from Caldanaerobacter subterraneus subsp. tengcongensis (strain DSM 15242 / JCM 11007 / NBRC 100824 / MB4) (Thermoanaerobacter tengcongensis).